We begin with the raw amino-acid sequence, 214 residues long: uncharacterized protein (214 aa).

The Response regulatory domain occupies 2-118 (KIVIADDHHV…ELVKTRQVHG (117 aa)). Residue Asp-53 is modified to 4-aspartylphosphate. The region spanning 142–207 (EKEKYYQLTR…QAALFAVKYN (66 aa)) is the HTH luxR-type domain. A DNA-binding region (H-T-H motif) is located at residues 166–185 (NKEIAAALFISEKTVKTHVS).

Post-translationally, phosphorylated by YhcY.

It is found in the cytoplasm. In terms of biological role, member of the two-component regulatory system YhcY/YhcZ. This is an uncharacterized protein from Bacillus subtilis (strain 168).